The following is a 196-amino-acid chain: CAG pathogenicity island protein 13 (196 aa).

The protein is CAG pathogenicity island protein 13 (cagS) of Helicobacter pylori (strain ATCC 700392 / 26695) (Campylobacter pylori).